We begin with the raw amino-acid sequence, 326 residues long: Vitamin B12 import system permease protein BtuC (326 aa).

Helical transmembrane passes span 15–35 (WLLCLSVLMLLALLLSLCAGE), 61–81 (LAVLLVGAALAISGAVMQALF), 88–108 (PGLLGVSNGAGVGLIAAVLLG), 112–132 (LPNWALGLCAIAGALIITLIL), 146–166 (LLAGVALGIICSALMTWAIYF), 184–204 (GGVDWRQSWLMLALIPVLLWI), 240–260 (GWMVGVSVALAGAIGFIGLVI), 274–294 (VLLPGCALAGASAVLLADIVA), and 302–322 (ELPIGVVTATLGAPVFIWLLL).

This sequence belongs to the binding-protein-dependent transport system permease family. FecCD subfamily. In terms of assembly, the complex is composed of two ATP-binding proteins (BtuD), two transmembrane proteins (BtuC) and a solute-binding protein (BtuF).

It localises to the cell inner membrane. Functionally, part of the ABC transporter complex BtuCDF involved in vitamin B12 import. Involved in the translocation of the substrate across the membrane. The polypeptide is Vitamin B12 import system permease protein BtuC (Shigella sonnei (strain Ss046)).